A 538-amino-acid polypeptide reads, in one-letter code: Ribulokinase 1 (538 aa).

This sequence belongs to the ribulokinase family.

It carries out the reaction D-ribulose + ATP = D-ribulose 5-phosphate + ADP + H(+). The catalysed reaction is L-ribulose + ATP = L-ribulose 5-phosphate + ADP + H(+). The protein operates within carbohydrate degradation; L-arabinose degradation via L-ribulose; D-xylulose 5-phosphate from L-arabinose (bacterial route): step 2/3. The sequence is that of Ribulokinase 1 from Staphylococcus saprophyticus subsp. saprophyticus (strain ATCC 15305 / DSM 20229 / NCIMB 8711 / NCTC 7292 / S-41).